The primary structure comprises 221 residues: Endonuclease V (221 aa).

Residues Asp44 and Asp112 each coordinate Mg(2+).

This sequence belongs to the endonuclease V family. The cofactor is Mg(2+).

It localises to the cytoplasm. It catalyses the reaction Endonucleolytic cleavage at apurinic or apyrimidinic sites to products with a 5'-phosphate.. In terms of biological role, DNA repair enzyme involved in the repair of deaminated bases. Selectively cleaves double-stranded DNA at the second phosphodiester bond 3' to a deoxyinosine leaving behind the intact lesion on the nicked DNA. In Nostoc punctiforme (strain ATCC 29133 / PCC 73102), this protein is Endonuclease V.